Reading from the N-terminus, the 567-residue chain is Periplasmic [NiFe] hydrogenase large subunit (567 aa).

Glu62 contributes to the Mg(2+) binding site. Cys81 and Cys84 together coordinate Ni(2+). Cys84 contributes to the Fe cation binding site. Position 498 (Leu498) interacts with Mg(2+). Ni(2+)-binding residues include Cys546 and Cys549. Residue Cys549 coordinates Fe cation. A Mg(2+)-binding site is contributed by His552. The propeptide occupies 553-567; sequence VIDGHTNEVHKFRIL.

Belongs to the [NiFe]/[NiFeSe] hydrogenase large subunit family. Heterodimer of a large and a small subunit. Ni(2+) is required as a cofactor. The cofactor is Fe cation.

It is found in the periplasm. The enzyme catalyses 2 Fe(III)-[cytochrome c3] + H2 = 2 Fe(II)-[cytochrome c3] + 2 H(+). Functionally, catalyzes the reversible oxidoreduction of molecular hydrogen, in conjunction with a specific electron acceptor, cytochrome c3. This chain is Periplasmic [NiFe] hydrogenase large subunit (hydB), found in Nitratidesulfovibrio vulgaris (strain DSM 19637 / Miyazaki F) (Desulfovibrio vulgaris).